The primary structure comprises 89 residues: Albumin-1 (89 aa).

Residue alanine 1 is a signal peptide. 3 cysteine pairs are disulfide-bonded: cysteine 4/cysteine 21, cysteine 8/cysteine 23, and cysteine 16/cysteine 33. Residues 39 to 46 (LSSVAKMI) constitute a propeptide that is removed on maturation.

Post-translationally, the C-terminal glycine may be removed from A1b.

A1b binds to basic 7S globulin (BG) and stimulates its phosphorylation activity. In Vigna radiata var. radiata (Mung bean), this protein is Albumin-1 (LEG).